Reading from the N-terminus, the 630-residue chain is 1-deoxy-D-xylulose-5-phosphate synthase (630 aa).

Thiamine diphosphate-binding positions include H73 and 114–116; that span reads SHA. D146 contributes to the Mg(2+) binding site. Residues 147 to 148, N176, F287, and E371 each bind thiamine diphosphate; that span reads GA. N176 is a binding site for Mg(2+).

This sequence belongs to the transketolase family. DXPS subfamily. Homodimer. Requires Mg(2+) as cofactor. Thiamine diphosphate serves as cofactor.

The enzyme catalyses D-glyceraldehyde 3-phosphate + pyruvate + H(+) = 1-deoxy-D-xylulose 5-phosphate + CO2. It participates in metabolic intermediate biosynthesis; 1-deoxy-D-xylulose 5-phosphate biosynthesis; 1-deoxy-D-xylulose 5-phosphate from D-glyceraldehyde 3-phosphate and pyruvate: step 1/1. Catalyzes the acyloin condensation reaction between C atoms 2 and 3 of pyruvate and glyceraldehyde 3-phosphate to yield 1-deoxy-D-xylulose-5-phosphate (DXP). In Corynebacterium jeikeium (strain K411), this protein is 1-deoxy-D-xylulose-5-phosphate synthase.